A 101-amino-acid chain; its full sequence is Citrate lyase acyl carrier protein (101 aa).

Residue Ser-14 is modified to O-(phosphoribosyl dephospho-coenzyme A)serine.

It belongs to the CitD family. Oligomer with a subunit composition of (alpha,beta,gamma)6.

It is found in the cytoplasm. Its function is as follows. Covalent carrier of the coenzyme of citrate lyase. This chain is Citrate lyase acyl carrier protein, found in Streptococcus uberis (strain ATCC BAA-854 / 0140J).